The chain runs to 221 residues: Endo-1,4-beta-xylanase 2 (221 aa).

The first 19 residues, 1–19, serve as a signal peptide directing secretion; sequence MVAFTSLLAGFAAIAGVLS. Residues 32–221 form the GH11 domain; the sequence is QTIGPGTGYS…SSGSASITVS (190 aa). N-linked (GlcNAc...) asparagine glycosylation is found at N69 and N92. E117 (nucleophile) is an active-site residue. E208 (proton donor) is an active-site residue.

It belongs to the glycosyl hydrolase 11 (cellulase G) family.

The protein localises to the secreted. The enzyme catalyses Endohydrolysis of (1-&gt;4)-beta-D-xylosidic linkages in xylans.. The protein operates within glycan degradation; xylan degradation. Endo-1,4-beta-xylanase involved in the hydrolysis of xylan, a major structural heterogeneous polysaccharide found in plant biomass representing the second most abundant polysaccharide in the biosphere, after cellulose. The protein is Endo-1,4-beta-xylanase 2 (Xyn2) of Trichoderma harzianum (Hypocrea lixii).